The sequence spans 619 residues: Phosphoenolpyruvate carboxykinase [GTP] (619 aa).

Substrate is bound by residues Arg-81 and 230-232; that span reads YGG. Residues Lys-239 and His-259 each contribute to the Mn(2+) site. Residue Ser-281 coordinates substrate. GTP is bound at residue 282 to 287; the sequence is ACGKTN. Cys-283 is an active-site residue. Asp-306 is a binding site for Mn(2+). 399–401 is a binding site for substrate; it reads NSR. Residues Arg-401, Arg-432, and 525-528 contribute to the GTP site; that span reads YGQN.

This sequence belongs to the phosphoenolpyruvate carboxykinase [GTP] family. In terms of assembly, monomer. Requires Mn(2+) as cofactor.

It carries out the reaction oxaloacetate + GTP = phosphoenolpyruvate + GDP + CO2. In terms of biological role, in parasitic nematodes PEPCK carboxylates phosphoenolpyruvate to oxaloacetate thus introducing the products of glycolysis to mitochondrial metabolism. Catalyzes the conversion of oxaloacetate (OAA) to phosphoenolpyruvate (PEP), the rate-limiting step in the metabolic pathway that produces glucose from lactate and other precursors derived from the citric acid cycle. The protein is Phosphoenolpyruvate carboxykinase [GTP] (PEPCK) of Haemonchus contortus (Barber pole worm).